The primary structure comprises 399 residues: Elongation factor Tu (399 aa).

Positions 10–209 (KPHVNIGTIG…AVDEYIPEPT (200 aa)) constitute a tr-type G domain. The interval 19–26 (GHVDHGKT) is G1. Residue 19–26 (GHVDHGKT) coordinates GTP. Position 26 (T26) interacts with Mg(2+). A G2 region spans residues 60 to 64 (GITIA). Residues 81–84 (DCPG) are G3. Residues 81–85 (DCPGH) and 136–139 (NKED) contribute to the GTP site. A G4 region spans residues 136–139 (NKED). The tract at residues 174 to 176 (SAK) is G5.

The protein belongs to the TRAFAC class translation factor GTPase superfamily. Classic translation factor GTPase family. EF-Tu/EF-1A subfamily. In terms of assembly, monomer.

The protein resides in the cytoplasm. It catalyses the reaction GTP + H2O = GDP + phosphate + H(+). Its function is as follows. GTP hydrolase that promotes the GTP-dependent binding of aminoacyl-tRNA to the A-site of ribosomes during protein biosynthesis. This chain is Elongation factor Tu, found in Sulfurimonas denitrificans (strain ATCC 33889 / DSM 1251) (Thiomicrospira denitrificans (strain ATCC 33889 / DSM 1251)).